The following is a 505-amino-acid chain: Cytochrome P450 76A2 (505 aa).

Cys448 contributes to the heme binding site.

The protein belongs to the cytochrome P450 family. The cofactor is heme.

The sequence is that of Cytochrome P450 76A2 (CYP76A2) from Solanum melongena (Eggplant).